We begin with the raw amino-acid sequence, 151 residues long: Large ribosomal subunit protein bL9 (151 aa).

The protein belongs to the bacterial ribosomal protein bL9 family.

Its function is as follows. Binds to the 23S rRNA. This Chlorobium limicola (strain DSM 245 / NBRC 103803 / 6330) protein is Large ribosomal subunit protein bL9.